The primary structure comprises 174 residues: NADH-quinone oxidoreductase subunit B (174 aa).

Residues C51, C52, C116, and C146 each contribute to the [4Fe-4S] cluster site.

Belongs to the complex I 20 kDa subunit family. As to quaternary structure, NDH-1 is composed of 14 different subunits. Subunits NuoB, C, D, E, F, and G constitute the peripheral sector of the complex. It depends on [4Fe-4S] cluster as a cofactor.

It localises to the cell inner membrane. It catalyses the reaction a quinone + NADH + 5 H(+)(in) = a quinol + NAD(+) + 4 H(+)(out). In terms of biological role, NDH-1 shuttles electrons from NADH, via FMN and iron-sulfur (Fe-S) centers, to quinones in the respiratory chain. The immediate electron acceptor for the enzyme in this species is believed to be ubiquinone. Couples the redox reaction to proton translocation (for every two electrons transferred, four hydrogen ions are translocated across the cytoplasmic membrane), and thus conserves the redox energy in a proton gradient. The sequence is that of NADH-quinone oxidoreductase subunit B from Anaplasma phagocytophilum (strain HZ).